The sequence spans 200 residues: Peptidyl-tRNA hydrolase (200 aa).

Tyr15 lines the tRNA pocket. The active-site Proton acceptor is the His20. Residues Phe66, Asn68, and Asn114 each coordinate tRNA.

Belongs to the PTH family. Monomer.

The protein localises to the cytoplasm. It catalyses the reaction an N-acyl-L-alpha-aminoacyl-tRNA + H2O = an N-acyl-L-amino acid + a tRNA + H(+). Its function is as follows. Hydrolyzes ribosome-free peptidyl-tRNAs (with 1 or more amino acids incorporated), which drop off the ribosome during protein synthesis, or as a result of ribosome stalling. Functionally, catalyzes the release of premature peptidyl moieties from peptidyl-tRNA molecules trapped in stalled 50S ribosomal subunits, and thus maintains levels of free tRNAs and 50S ribosomes. This is Peptidyl-tRNA hydrolase from Ralstonia nicotianae (strain ATCC BAA-1114 / GMI1000) (Ralstonia solanacearum).